Consider the following 268-residue polypeptide: 2,5-diamino-6-ribosylamino-4(3H)-pyrimidinone 5'-phosphate reductase (268 aa).

NADP(+) contacts are provided by residues Thr-68, Asp-72, 103–106 (SNLR), and 191–195 (GAELL).

The protein belongs to the HTP reductase family. As to quaternary structure, homodimer.

The enzyme catalyses 2,5-diamino-6-(1-D-ribitylamino)pyrimidin-4(3H)-one 5'-phosphate + NADP(+) = 2,5-diamino-6-(1-D-ribosylamino)pyrimidin-4(3H)-one 5'-phosphate + NADPH + H(+). It carries out the reaction 2,5-diamino-6-(1-D-ribitylamino)pyrimidin-4(3H)-one 5'-phosphate + NAD(+) = 2,5-diamino-6-(1-D-ribosylamino)pyrimidin-4(3H)-one 5'-phosphate + NADH + H(+). It participates in cofactor biosynthesis; riboflavin biosynthesis. Functionally, catalyzes an early step in riboflavin biosynthesis, the NADPH-dependent reduction of the ribose side chain of 2,5-diamino-6-ribosylamino-4(3H)-pyrimidinone 5'-phosphate, yielding 2,5-diamino-6-ribitylamino-4(3H)-pyrimidinone 5'-phosphate. The polypeptide is 2,5-diamino-6-ribosylamino-4(3H)-pyrimidinone 5'-phosphate reductase (Schizosaccharomyces pombe (strain 972 / ATCC 24843) (Fission yeast)).